A 779-amino-acid polypeptide reads, in one-letter code: Aconitate hydratase, mitochondrial (779 aa).

Residues 1-28 (MIAMDRIARIPIARWTSRAFRVSAAARQ) constitute a mitochondrion transit peptide. Substrate is bound by residues glutamine 97 and 190–192 (DSH). [4Fe-4S] cluster is bound by residues cysteine 383, cysteine 446, and cysteine 449. Residues arginine 472, arginine 477, arginine 605, and 668-669 (SR) each bind substrate.

The protein belongs to the aconitase/IPM isomerase family. In terms of assembly, monomer. [4Fe-4S] cluster is required as a cofactor.

It is found in the mitochondrion. The enzyme catalyses citrate = D-threo-isocitrate. The protein operates within carbohydrate metabolism; tricarboxylic acid cycle; isocitrate from oxaloacetate: step 2/2. Catalyzes the isomerization of citrate to isocitrate via cis-aconitate. This chain is Aconitate hydratase, mitochondrial, found in Gracilaria gracilis (Red alga).